The chain runs to 236 residues: CHD1 helical C-terminal domain containing protein 1 (236 aa).

Residues 44–145 form a CHD1 helical C-terminal domain (CHCT) region; sequence LDQDTFKTCK…SSQPAKFLVT (102 aa). Residues 184 to 236 are disordered; the sequence is LSNMQTPGQGSPLPGQPRSQDHVKKDSLRELSQKPKLKRKRIKEAPETPETEP. The span at 202 to 216 shows a compositional bias: basic and acidic residues; sequence SQDHVKKDSLRELSQ.

The protein resides in the cytoplasm. The protein localises to the nucleus. In terms of biological role, may play a role in regulation of apoptosis. The sequence is that of CHD1 helical C-terminal domain containing protein 1 from Homo sapiens (Human).